The chain runs to 189 residues: Probable nicotinate-nucleotide adenylyltransferase (189 aa).

It belongs to the NadD family.

It catalyses the reaction nicotinate beta-D-ribonucleotide + ATP + H(+) = deamido-NAD(+) + diphosphate. It participates in cofactor biosynthesis; NAD(+) biosynthesis; deamido-NAD(+) from nicotinate D-ribonucleotide: step 1/1. Its function is as follows. Catalyzes the reversible adenylation of nicotinate mononucleotide (NaMN) to nicotinic acid adenine dinucleotide (NaAD). This Bacillus cytotoxicus (strain DSM 22905 / CIP 110041 / 391-98 / NVH 391-98) protein is Probable nicotinate-nucleotide adenylyltransferase.